The sequence spans 191 residues: Holliday junction branch migration complex subunit RuvA (191 aa).

The domain I stretch occupies residues 1 to 64 (MIGRLTGTLA…EDAQLLYGFL (64 aa)). A domain II region spans residues 65–138 (TATERATFRQ…KGKLGPDLAL (74 aa)). Residues 138-142 (LPGAV) are flexible linker. Positions 143–191 (IRNEAQSDIVQALIALGYNEREAAAAIKPLPADVGVSDGIKLALRALGK) are domain III.

It belongs to the RuvA family. As to quaternary structure, homotetramer. Forms an RuvA(8)-RuvB(12)-Holliday junction (HJ) complex. HJ DNA is sandwiched between 2 RuvA tetramers; dsDNA enters through RuvA and exits via RuvB. An RuvB hexamer assembles on each DNA strand where it exits the tetramer. Each RuvB hexamer is contacted by two RuvA subunits (via domain III) on 2 adjacent RuvB subunits; this complex drives branch migration. In the full resolvosome a probable DNA-RuvA(4)-RuvB(12)-RuvC(2) complex forms which resolves the HJ.

It is found in the cytoplasm. Functionally, the RuvA-RuvB-RuvC complex processes Holliday junction (HJ) DNA during genetic recombination and DNA repair, while the RuvA-RuvB complex plays an important role in the rescue of blocked DNA replication forks via replication fork reversal (RFR). RuvA specifically binds to HJ cruciform DNA, conferring on it an open structure. The RuvB hexamer acts as an ATP-dependent pump, pulling dsDNA into and through the RuvAB complex. HJ branch migration allows RuvC to scan DNA until it finds its consensus sequence, where it cleaves and resolves the cruciform DNA. This chain is Holliday junction branch migration complex subunit RuvA, found in Leptothrix cholodnii (strain ATCC 51168 / LMG 8142 / SP-6) (Leptothrix discophora (strain SP-6)).